A 185-amino-acid chain; its full sequence is Peptidyl-tRNA hydrolase (185 aa).

Tyrosine 15 contributes to the tRNA binding site. Histidine 20 (proton acceptor) is an active-site residue. TRNA is bound by residues tyrosine 64, asparagine 66, and asparagine 112.

It belongs to the PTH family. Monomer.

Its subcellular location is the cytoplasm. It catalyses the reaction an N-acyl-L-alpha-aminoacyl-tRNA + H2O = an N-acyl-L-amino acid + a tRNA + H(+). Its function is as follows. Hydrolyzes ribosome-free peptidyl-tRNAs (with 1 or more amino acids incorporated), which drop off the ribosome during protein synthesis, or as a result of ribosome stalling. Catalyzes the release of premature peptidyl moieties from peptidyl-tRNA molecules trapped in stalled 50S ribosomal subunits, and thus maintains levels of free tRNAs and 50S ribosomes. The polypeptide is Peptidyl-tRNA hydrolase (Porphyromonas gingivalis (strain ATCC BAA-308 / W83)).